Consider the following 205-residue polypeptide: High frequency lysogenization protein HflD homolog (205 aa).

The protein belongs to the HflD family.

The protein localises to the cytoplasm. Its subcellular location is the cell inner membrane. The sequence is that of High frequency lysogenization protein HflD homolog from Hahella chejuensis (strain KCTC 2396).